The chain runs to 388 residues: Pepsin F (388 aa).

Positions 1-15 (MKWLGLLGLVALSEC) are cleaved as a signal peptide. A propeptide spans 16–58 (LVTIPLMKVKSMRENLRENDILLDYLEKHPYRPTYKLLSGQQD) (activation peptide). Positions 74-385 (YIGIISIGTP…DRANNRIGLA (312 aa)) constitute a Peptidase A1 domain. Residue aspartate 92 is part of the active site. 2 disulfide bridges follow: cysteine 105/cysteine 110 and cysteine 266/cysteine 270. Aspartate 275 is a catalytic residue. Cysteine 309 and cysteine 343 are oxidised to a cystine.

It belongs to the peptidase A1 family.

It localises to the secreted. The enzyme catalyses Preferential cleavage: hydrophobic, preferably aromatic, residues in P1 and P1' positions. Cleaves 1-Phe-|-Val-2, 4-Gln-|-His-5, 13-Glu-|-Ala-14, 14-Ala-|-Leu-15, 15-Leu-|-Tyr-16, 16-Tyr-|-Leu-17, 23-Gly-|-Phe-24, 24-Phe-|-Phe-25 and 25-Phe-|-Tyr-26 bonds in the B chain of insulin.. Functionally, shows particularly broad specificity; although bonds involving phenylalanine and leucine are preferred, many others are also cleaved to some extent. The polypeptide is Pepsin F (Oryctolagus cuniculus (Rabbit)).